We begin with the raw amino-acid sequence, 1365 residues long: Polyprotein ABA-1 (1365 aa).

This sequence belongs to the NPA family. In terms of processing, nematode polyprotein allergens (NPAs) are synthesized as large polypeptides that are subsequently proteolytically cleaved to active polypeptide units. As to expression, pseudocoelomic fluid.

In terms of biological role, has high binding affinity for fatty acids and retinoids. In Ascaris suum (Pig roundworm), this protein is Polyprotein ABA-1 (ABA-1).